The chain runs to 347 residues: N-acetyl-gamma-glutamyl-phosphate reductase (347 aa).

Cys-150 is an active-site residue.

The protein belongs to the NAGSA dehydrogenase family. Type 1 subfamily.

Its subcellular location is the cytoplasm. It catalyses the reaction N-acetyl-L-glutamate 5-semialdehyde + phosphate + NADP(+) = N-acetyl-L-glutamyl 5-phosphate + NADPH + H(+). The protein operates within amino-acid biosynthesis; L-arginine biosynthesis; N(2)-acetyl-L-ornithine from L-glutamate: step 3/4. Functionally, catalyzes the NADPH-dependent reduction of N-acetyl-5-glutamyl phosphate to yield N-acetyl-L-glutamate 5-semialdehyde. This chain is N-acetyl-gamma-glutamyl-phosphate reductase, found in Leifsonia xyli subsp. xyli (strain CTCB07).